Reading from the N-terminus, the 120-residue chain is Glycine cleavage system H protein (120 aa).

The region spanning 17 to 99 is the Lipoyl-binding domain; that stretch reads VATVGITEHA…QGAAWFFKLK (83 aa). An N6-lipoyllysine modification is found at K58.

Belongs to the GcvH family. The glycine cleavage system is composed of four proteins: P, T, L and H. It depends on (R)-lipoate as a cofactor.

The glycine cleavage system catalyzes the degradation of glycine. The H protein shuttles the methylamine group of glycine from the P protein to the T protein. The sequence is that of Glycine cleavage system H protein from Sinorhizobium fredii (strain NBRC 101917 / NGR234).